The primary structure comprises 154 residues: 6,7-dimethyl-8-ribityllumazine synthase (154 aa).

5-amino-6-(D-ribitylamino)uracil contacts are provided by residues Phe-22, 56 to 58 (AFE), and 80 to 82 (AVI). 85–86 (AT) is a (2S)-2-hydroxy-3-oxobutyl phosphate binding site. His-88 serves as the catalytic Proton donor. Residue Phe-113 participates in 5-amino-6-(D-ribitylamino)uracil binding. Arg-127 contributes to the (2S)-2-hydroxy-3-oxobutyl phosphate binding site.

It belongs to the DMRL synthase family.

It catalyses the reaction (2S)-2-hydroxy-3-oxobutyl phosphate + 5-amino-6-(D-ribitylamino)uracil = 6,7-dimethyl-8-(1-D-ribityl)lumazine + phosphate + 2 H2O + H(+). It functions in the pathway cofactor biosynthesis; riboflavin biosynthesis; riboflavin from 2-hydroxy-3-oxobutyl phosphate and 5-amino-6-(D-ribitylamino)uracil: step 1/2. In terms of biological role, catalyzes the formation of 6,7-dimethyl-8-ribityllumazine by condensation of 5-amino-6-(D-ribitylamino)uracil with 3,4-dihydroxy-2-butanone 4-phosphate. This is the penultimate step in the biosynthesis of riboflavin. This is 6,7-dimethyl-8-ribityllumazine synthase from Desulfitobacterium hafniense (strain DSM 10664 / DCB-2).